A 261-amino-acid polypeptide reads, in one-letter code: Sepiapterin reductase (261 aa).

Methionine 1 carries the N-acetylmethionine modification. Residue 15-21 (GASRGFG) participates in NADP(+) binding. At serine 33 the chain carries Phosphoserine. 43–44 (RS) contributes to the NADP(+) binding site. Serine 46 is modified (phosphoserine). 70–71 (DL) serves as a coordination point for NADP(+). Residues 158–159 (SL) and tyrosine 171 each bind substrate. Lysine 175 contributes to the NADP(+) binding site. Residue serine 196 is modified to Phosphoserine. Glycine 200 lines the substrate pocket. Residue 202–207 (LDNDMQ) coordinates NADP(+). Serine 214 is modified (phosphoserine). Substrate is bound by residues lysine 222 and aspartate 258.

This sequence belongs to the sepiapterin reductase family. As to quaternary structure, homodimer.

It localises to the cytoplasm. The enzyme catalyses L-erythro-7,8-dihydrobiopterin + NADP(+) = L-sepiapterin + NADPH + H(+). The catalysed reaction is (6R)-L-erythro-5,6,7,8-tetrahydrobiopterin + 2 NADP(+) = 6-pyruvoyl-5,6,7,8-tetrahydropterin + 2 NADPH + 2 H(+). In terms of biological role, catalyzes the final one or two reductions in tetra-hydrobiopterin biosynthesis to form 5,6,7,8-tetrahydrobiopterin. The protein is Sepiapterin reductase (Spr) of Mus musculus (Mouse).